The primary structure comprises 631 residues: MSATKLTRREQRARAQHFIDTLEGTAFPNSKRIYLTGTHSGVRVPMREIQLSPTLIGGSKEQPQFEENEAIPVYDTSGPYGDPQIAINVQQGLAKLRQPWIDARGDTEELTVRSSDYTKARLADDGLDELRFSGVLTPKRAKAGRRVTQLHYARQGIITPEMEFIAIRENMGRERIRSEVLRHQHPGMSFGARLPENITAEFVRDEVAAGRAIIPANINHPESEPMIIGRNFLVKVNANIGNSAVTSSIEEEVEKLVWSTRWGADTVMDLSTGRYIHETREWILRNSPVPIGTVPIYQALEKVNGIAEDLTWEAFRDTLLEQAEQGVDYFTIHAGVLLRYVPMTAKRLTGIVSRGGSIMAKWCLSHHQENFLYQHFREICEICAAYDVSLSLGDGLRPGSIQDANDEAQFAELHTLGELTKIAWEYDVQVMIEGPGHVPMQMIRRNMTEELEHCHEAPFYTLGPLTTDIAPGYDHFTSGIGAAMIGWFGCAMLCYVTPKEHLGLPNKEDVKQGLITYKIAAHAADLAKGHPGAQIRDNAMSKARFEFRWEDQFNLALDPFTARAYHDETLPQESGKVAHFCSMCGPKFCSMKISQEVRDYAATQTIEMGMADMSENFRARGGEIYLRKEEA.

Substrate contacts are provided by residues asparagine 239, methionine 268, tyrosine 297, histidine 333, serine 353–glycine 355, aspartate 394–arginine 397, and glutamate 433. Residue histidine 437 coordinates Zn(2+). Tyrosine 460 is a binding site for substrate. Histidine 501 serves as a coordination point for Zn(2+). Cysteine 581, cysteine 584, and cysteine 589 together coordinate [4Fe-4S] cluster.

It belongs to the ThiC family. As to quaternary structure, homodimer. The cofactor is [4Fe-4S] cluster.

It carries out the reaction 5-amino-1-(5-phospho-beta-D-ribosyl)imidazole + S-adenosyl-L-methionine = 4-amino-2-methyl-5-(phosphooxymethyl)pyrimidine + CO + 5'-deoxyadenosine + formate + L-methionine + 3 H(+). The protein operates within cofactor biosynthesis; thiamine diphosphate biosynthesis. In terms of biological role, catalyzes the synthesis of the hydroxymethylpyrimidine phosphate (HMP-P) moiety of thiamine from aminoimidazole ribotide (AIR) in a radical S-adenosyl-L-methionine (SAM)-dependent reaction. The chain is Phosphomethylpyrimidine synthase from Shigella boydii serotype 4 (strain Sb227).